The primary structure comprises 71 residues: Conotoxin Bu23 (71 aa).

Residues 1 to 21 form the signal peptide; it reads MGMRMMVTVFLLGVLATTVVS. Residues 22–37 constitute a propeptide that is removed on maturation; sequence LRSNRASDGRRGIVNK. N70 carries the asparagine amide modification.

This sequence belongs to the conotoxin A superfamily. In terms of processing, contains 3 disulfide bonds. They are not indicated here, since framework IV presents two different connectivities (I-V, II-III, IV-VI and I-III, II-V, IV-VI). In terms of tissue distribution, expressed by the venom duct.

Its subcellular location is the secreted. This Conus bullatus (Bubble cone) protein is Conotoxin Bu23.